The sequence spans 228 residues: Calcyclin-binding protein (228 aa).

An N-acetylalanine modification is found at Ala2. The tract at residues 2-80 (ASEELQKDLE…YTVKISNYGW (79 aa)) is interaction with SIAH1. Ser3 carries the phosphoserine modification. Lys8 and Lys19 each carry N6-acetyllysine. Ser34 is modified (phosphoserine). The CS domain occupies 73–167 (VKISNYGWDQ…VENTRWDYLT (95 aa)). Residues 73-228 (VKISNYGWDQ…EKQAKGDTEF (156 aa)) are interaction with SKP1. 2 positions are modified to N6-acetyllysine: Lys85 and Lys118. Residues 154-228 (CRKKVENTRW…EKQAKGDTEF (75 aa)) are interaction with S100A6. In terms of domain architecture, SGS spans 168 to 228 (QVEKERKEKE…EKQAKGDTEF (61 aa)).

As to quaternary structure, interacts with protein of the S100 family S100A1, S100A6, S100B, S100P and S100A12 in a calcium-dependent manner. Component of some large E3 complex at least composed of UBE2D1, SIAH1, CACYBP/SIP, SKP1, APC and TBL1X. Interacts directly with SIAH1, SIAH2 and SKP1. Phosphorylated on serine residues. Phosphorylated upon induction by RA or at high calcium concentrations.

Its subcellular location is the cytoplasm. It is found in the nucleus. May be involved in calcium-dependent ubiquitination and subsequent proteasomal degradation of target proteins. Probably serves as a molecular bridge in ubiquitin E3 complexes. Participates in the ubiquitin-mediated degradation of beta-catenin (CTNNB1). This Pongo abelii (Sumatran orangutan) protein is Calcyclin-binding protein (CACYBP).